The following is a 181-amino-acid chain: Acireductone dioxygenase (181 aa).

Residues H98, H100, E104, and H142 each contribute to the Fe(2+) site. Positions 98, 100, 104, and 142 each coordinate Ni(2+).

Belongs to the acireductone dioxygenase (ARD) family. Monomer. It depends on Fe(2+) as a cofactor. The cofactor is Ni(2+).

The enzyme catalyses 1,2-dihydroxy-5-(methylsulfanyl)pent-1-en-3-one + O2 = 3-(methylsulfanyl)propanoate + CO + formate + 2 H(+). The catalysed reaction is 1,2-dihydroxy-5-(methylsulfanyl)pent-1-en-3-one + O2 = 4-methylsulfanyl-2-oxobutanoate + formate + 2 H(+). Its pathway is amino-acid biosynthesis; L-methionine biosynthesis via salvage pathway; L-methionine from S-methyl-5-thio-alpha-D-ribose 1-phosphate: step 5/6. In terms of biological role, catalyzes 2 different reactions between oxygen and the acireductone 1,2-dihydroxy-3-keto-5-methylthiopentene (DHK-MTPene) depending upon the metal bound in the active site. Fe-containing acireductone dioxygenase (Fe-ARD) produces formate and 2-keto-4-methylthiobutyrate (KMTB), the alpha-ketoacid precursor of methionine in the methionine recycle pathway. Ni-containing acireductone dioxygenase (Ni-ARD) produces methylthiopropionate, carbon monoxide and formate, and does not lie on the methionine recycle pathway. The protein is Acireductone dioxygenase of Synechococcus sp. (strain ATCC 27144 / PCC 6301 / SAUG 1402/1) (Anacystis nidulans).